Reading from the N-terminus, the 535-residue chain is Dipeptide-binding protein (535 aa).

Positions 1 to 28 are cleaved as a signal peptide; it reads MRISLKKSGMLKLGLSLVAMTVAASVQA. An intrachain disulfide couples C34 to C262. Glycyl-L-leucine contacts are provided by residues 48 to 50, 383 to 385, and 433 to 436; these read TSG, RPY, and WTGD. C450 and C463 are oxidised to a cystine.

The protein belongs to the bacterial solute-binding protein 5 family. The complex is composed of two ATP-binding proteins (DppD and DppF), two transmembrane proteins (DppB and DppC) and a solute-binding protein (DppA).

It localises to the periplasm. Heme binding is inhibited by dipeptide. In terms of biological role, part of the ABC transporter DppABCDF involved in dipeptide transport. Binds dipeptides and accepts a wide range of side chains, including small neutral, bulky hydrophobic, and positively and negatively charged groups. Tripeptides are poor substrates. DppA alone controls the specificity of the Dpp transporter. In addition, plays a role in chemotaxis toward peptides via interaction with the chemotaxis protein Tap. Functionally, binds heme. When a foreign outer membrane heme receptor is expressed in E.coli, DppABCDF can also transport heme and its precursor, 5-aminolevulinic acid (ALA), from the periplasm into the cytoplasm. The chain is Dipeptide-binding protein from Escherichia coli (strain K12).